We begin with the raw amino-acid sequence, 256 residues long: Small ribosomal subunit protein eS1 (256 aa).

Ala2 bears the N-acetylalanine; partial mark.

It belongs to the eukaryotic ribosomal protein eS1 family. As to quaternary structure, component of the small ribosomal subunit. Mature ribosomes consist of a small (40S) and a large (60S) subunit. The 40S subunit contains about 33 different proteins and 1 molecule of RNA (18S). The 60S subunit contains about 49 different proteins and 3 molecules of RNA (25S, 5.8S and 5S).

The protein resides in the cytoplasm. The chain is Small ribosomal subunit protein eS1 (rps1) from Sclerotinia sclerotiorum (strain ATCC 18683 / 1980 / Ss-1) (White mold).